The primary structure comprises 115 residues: NADH-ubiquinone oxidoreductase chain 3 (115 aa).

3 consecutive transmembrane segments (helical) span residues 4–24 (LLVL…AFWL), 55–75 (FFLV…LLPL), and 87–107 (MTLT…YEWL).

The protein belongs to the complex I subunit 3 family. In terms of assembly, core subunit of respiratory chain NADH dehydrogenase (Complex I) which is composed of 45 different subunits. Interacts with TMEM186. Interacts with TMEM242.

Its subcellular location is the mitochondrion inner membrane. It carries out the reaction a ubiquinone + NADH + 5 H(+)(in) = a ubiquinol + NAD(+) + 4 H(+)(out). Functionally, core subunit of the mitochondrial membrane respiratory chain NADH dehydrogenase (Complex I) which catalyzes electron transfer from NADH through the respiratory chain, using ubiquinone as an electron acceptor. Essential for the catalytic activity of complex I. The polypeptide is NADH-ubiquinone oxidoreductase chain 3 (Peromyscus eremicus (Cactus mouse)).